The primary structure comprises 275 residues: MGIRIYRSYTPGTRNRSSSDFSEITKSKPEKSLLAKKTQKAGRNHRGVITVRHRGGGHKQRYRIVDFKRNKRDIEAKVASIQYDPNRNARIALLHYKDGEKRYILAPKNLSVGAQVSAGETAPLDVGNALPLSNIPLGTSVHNIELLPGKGGQIIRAAGTSAQIVAKEGNFVTLKLPSSEVRMVYKQCYATIGEVGNAEFKNLTLGKAGRKRWLGIRPTVRGVVMNPCDHPHGGGEGRSPIGRARPVTPWGAPALGMKTRRKNKYSDFCIIRRRK.

Disordered regions lie at residues 1–28 (MGIR…TKSK) and 227–251 (PCDH…TPWG). The span at 10 to 22 (TPGTRNRSSSDFS) shows a compositional bias: polar residues.

It belongs to the universal ribosomal protein uL2 family. Part of the 50S ribosomal subunit.

The protein resides in the plastid. Its subcellular location is the chloroplast. The protein is Large ribosomal subunit protein uL2c (rpl2) of Rhodomonas salina (Cryptomonas salina).